The chain runs to 671 residues: MTKYNEAYCDVLIVGAGPAGVMAAAHLLSYGTTARPHRVRIFDATKEVNGSDESTESLSTDVIADALNSGASGPEKDAASTTEDLPMLVTTLQVSDVLHDTGDDTKIAYRETATEQQVLLLADTTANTSSTMNPRSMCEAGCRFHQIYQGHCFPEYELDSERLRSVDGRAQVLEDEHETGQLRLERLGRPEELLELDEENSMSVVTNLKAAPYKFLMKDVDENFPGELSTSGGKTTSISADESAIDAALHAVWDADDLGAAWHLDEASGLRAVDWNAAQWFKSGQPWTPDAAKSLQEGRVFLAGDARHRHPPLTGIGKNTSIADCYNLTWKLLGVLLGVARADPARTYVAERVYIRMRAATDIAVDAEMESLAAKWITVQLTLSRSWISSAKEAERWDAVLRDSAMSASKPMWTTSDMRASFDAGLMGHGHAHDHVTPTIKEFASSSISRSISELASTSWWESRGWGNGGPFESLMEDARWTGAVESNCRYAAYDRDAPVLHEHVAWVTRFTSRARTAVLEAAVGQAHVVDCWDVGLVEPALDDLDSAGAGLHVAHHADQWPAQLDEAVWPRESLSDWRIVTDTSATGEGYQTSPREAPGDYADLNADNAKAHFNGQFAGHKAYGDAAAADGGGCHGRILVGPAVRGRHLHREIPLGEECQRAAQPLFKEV.

Residues 10 to 43 (DVLI…RIFD) and 295 to 305 (LQEGRVFLAGD) contribute to the FAD site.

It belongs to the PheA/TfdB FAD monooxygenase family. FAD is required as a cofactor.

The protein resides in the cytoplasm. It catalyses the reaction phenol + NADPH + O2 + H(+) = catechol + NADP(+) + H2O. It participates in aromatic compound metabolism; phenol degradation. Its function is as follows. Hydroxylates phenol to catechol. Also acts on cresols. The polypeptide is Phenol 2-monooxygenase (tbuD) (Ralstonia pickettii (Burkholderia pickettii)).